The primary structure comprises 388 residues: 3-dehydroquinate synthase (388 aa).

It belongs to the archaeal-type DHQ synthase family.

It catalyses the reaction 2-amino-2,3,7-trideoxy-D-lyxo-hept-6-ulosonate + NAD(+) + H2O = 3-dehydroquinate + NH4(+) + NADH + H(+). Catalyzes the oxidative deamination and cyclization of 2-amino-3,7-dideoxy-D-threo-hept-6-ulosonic acid (ADH) to yield 3-dehydroquinate (DHQ), which is fed into the canonical shikimic pathway of aromatic amino acid biosynthesis. The chain is 3-dehydroquinate synthase from Natronomonas pharaonis (strain ATCC 35678 / DSM 2160 / CIP 103997 / JCM 8858 / NBRC 14720 / NCIMB 2260 / Gabara) (Halobacterium pharaonis).